We begin with the raw amino-acid sequence, 170 residues long: Transcription factor E (170 aa).

Residues 1–93 form the HTH TFE/IIEalpha-type domain; the sequence is MKDVYLYIVE…TWYVDDEIIK (93 aa).

This sequence belongs to the TFE family. As to quaternary structure, monomer. Interaction with RNA polymerase subunits RpoF and RpoE is necessary for Tfe stimulatory transcription activity. Able to interact with Tbp and RNA polymerase in the absence of DNA promoter. Interacts both with the preinitiation and elongation complexes.

Transcription factor that plays a role in the activation of archaeal genes transcribed by RNA polymerase. Facilitates transcription initiation by enhancing TATA-box recognition by TATA-box-binding protein (Tbp), and transcription factor B (Tfb) and RNA polymerase recruitment. Not absolutely required for transcription in vitro, but particularly important in cases where Tbp or Tfb function is not optimal. It dynamically alters the nucleic acid-binding properties of RNA polymerases by stabilizing the initiation complex and destabilizing elongation complexes. Seems to translocate with the RNA polymerase following initiation and acts by binding to the non template strand of the transcription bubble in elongation complexes. In Pyrobaculum aerophilum (strain ATCC 51768 / DSM 7523 / JCM 9630 / CIP 104966 / NBRC 100827 / IM2), this protein is Transcription factor E.